Here is a 255-residue protein sequence, read N- to C-terminus: 4-diphosphocytidyl-2-C-methyl-D-erythritol kinase (255 aa).

Residue Lys9 is part of the active site. Residue 95 to 105 (PSQAGLGGGSS) coordinates ATP. Asp137 is a catalytic residue.

The protein belongs to the GHMP kinase family. IspE subfamily.

It carries out the reaction 4-CDP-2-C-methyl-D-erythritol + ATP = 4-CDP-2-C-methyl-D-erythritol 2-phosphate + ADP + H(+). It functions in the pathway isoprenoid biosynthesis; isopentenyl diphosphate biosynthesis via DXP pathway; isopentenyl diphosphate from 1-deoxy-D-xylulose 5-phosphate: step 3/6. Catalyzes the phosphorylation of the position 2 hydroxy group of 4-diphosphocytidyl-2C-methyl-D-erythritol. This is 4-diphosphocytidyl-2-C-methyl-D-erythritol kinase from Sulfurovum sp. (strain NBC37-1).